Consider the following 176-residue polypeptide: RNA pyrophosphohydrolase (176 aa).

The 144-residue stretch at 6 to 149 folds into the Nudix hydrolase domain; it reads GYRPNVGIVI…KRDVYRRVMK (144 aa). The Nudix box signature appears at 38–59; it reads GGINPGESAEQAMYRELFEEVG.

The protein belongs to the Nudix hydrolase family. RppH subfamily. It depends on a divalent metal cation as a cofactor.

In terms of biological role, accelerates the degradation of transcripts by removing pyrophosphate from the 5'-end of triphosphorylated RNA, leading to a more labile monophosphorylated state that can stimulate subsequent ribonuclease cleavage. The chain is RNA pyrophosphohydrolase from Salmonella paratyphi C (strain RKS4594).